The following is a 207-amino-acid chain: Outer-membrane lipoprotein carrier protein (207 aa).

A signal peptide spans 1–21 (MRLIRMLLATALTFSVIPAHA).

Belongs to the LolA family. Monomer.

It is found in the periplasm. Its function is as follows. Participates in the translocation of lipoproteins from the inner membrane to the outer membrane. Only forms a complex with a lipoprotein if the residue after the N-terminal Cys is not an aspartate (The Asp acts as a targeting signal to indicate that the lipoprotein should stay in the inner membrane). This chain is Outer-membrane lipoprotein carrier protein, found in Pseudomonas syringae pv. tomato (strain ATCC BAA-871 / DC3000).